The chain runs to 717 residues: SAGA factor-like TAF6 (717 aa).

A sufficient for interaction with Taf9 region spans residues 123-204; that stretch reads KSYAGFDPRS…VPPMLGAMDS (82 aa).

The protein belongs to the TAF6 family. As to quaternary structure, component of the Spt-Ada-Gcn5 acetyltransferase (SAGA) complex consisting of wda/Taf5L, Saf6, Taf9, Taf10b, Taf12, Ada1, Spt3, Spt7, Spt20, Sf3b3, Sf3b5, Nipped-A/Tra1, a histone acetyltransferase (HAT) module made up of Gcn5, Ada2b (Isoform B), Ada3 and Sgf29, and a deubiquitinase (DUB) module made up of not/nonstop, Sgf11 and e(y)2 tethered to SAGA by Atxn7; not essential for SAGA complex assembly, histone-modifying activity or chromosomal recruitment. Interacts (via N-terminal histone-fold domain) with Taf9 (via N-terminal histone-fold domain); the interaction is probably direct. Probably forms a histone-like heterooctamer structure with Taf9, Taf12 and Taf10b.

The protein localises to the nucleus. It is found in the chromosome. Component of the transcription regulatory complex SAGA, a multiprotein complex that activates transcription by remodeling chromatin and mediating histone acetylation and deubiquitination. The SAGA complex predominantly acetylates histone H3. Involved in SAGA complex coactivator function but not essential for SAGA complex assembly, histone-modifying activity or chromosomal recruitment. Required for oogenesis; involved in transcriptional activation. The protein is SAGA factor-like TAF6 of Drosophila melanogaster (Fruit fly).